The sequence spans 736 residues: Eukaryotic translation initiation factor 3 subunit B (736 aa).

Residues 1–94 (MAAVFDDIRL…LFIEFEDAGA (94 aa)) are sufficient for interaction with HCR1 and TIF32. Residues 1-219 (MAAVFDDIRL…GIASWGGPQF (219 aa)) are sufficient for interaction with PIC8. Residues 37 to 120 (RYVVVDGAPV…HRLWVNGLDD (84 aa)) form the RRM domain. WD repeat units follow at residues 140–182 (EFEA…PENV), 186–224 (RRNW…RLRR), 226–244 (AHPD…YLVT), 245–284 (FSSE…CVKT), 288–328 (PPQQ…QLLG), 332–375 (MKIE…QSCK), 443–483 (EIKD…VSFY), 511–557 (AIDG…TEKI), 566–604 (ATLR…KAEN), and 616–662 (VREE…QDAM).

The protein belongs to the eIF-3 subunit B family. In terms of assembly, component of the eukaryotic translation initiation factor 3 (eIF-3) complex.

It is found in the cytoplasm. Functionally, RNA-binding component of the eukaryotic translation initiation factor 3 (eIF-3) complex, which is involved in protein synthesis of a specialized repertoire of mRNAs and, together with other initiation factors, stimulates binding of mRNA and methionyl-tRNAi to the 40S ribosome. The eIF-3 complex specifically targets and initiates translation of a subset of mRNAs involved in cell proliferation. The sequence is that of Eukaryotic translation initiation factor 3 subunit B from Eremothecium gossypii (strain ATCC 10895 / CBS 109.51 / FGSC 9923 / NRRL Y-1056) (Yeast).